Reading from the N-terminus, the 180-residue chain is E1B protein, small T-antigen (180 aa).

The disordered stretch occupies residues 142-180 (GPAAPLARQGSQQEEQQQRQEEEQVQEEMRSGLDPPTEN). Positions 157 to 172 (QQQRQEEEQVQEEMRS) are enriched in basic and acidic residues.

This sequence belongs to the adenoviridae E1B 19 kDa protein family.

The protein is E1B protein, small T-antigen of Simian adenovirus serotype 7 (SAdV-7).